The sequence spans 380 residues: O-phospho-L-seryl-tRNA:Cys-tRNA synthase (380 aa).

Pyridoxal 5'-phosphate is bound by residues 86–87, N192, and 215–217; these read AR and SGH. Residue K218 is modified to N6-(pyridoxal phosphate)lysine.

This sequence belongs to the SepCysS family. As to quaternary structure, homodimer. Interacts with SepRS. Requires pyridoxal 5'-phosphate as cofactor.

It carries out the reaction O-phospho-L-seryl-tRNA(Cys) + hydrogen sulfide + H(+) = L-cysteinyl-tRNA(Cys) + phosphate. Functionally, converts O-phospho-L-seryl-tRNA(Cys) (Sep-tRNA(Cys)) to L-cysteinyl-tRNA(Cys) (Cys-tRNA(Cys)). The polypeptide is O-phospho-L-seryl-tRNA:Cys-tRNA synthase (Methanococcus maripaludis (strain C5 / ATCC BAA-1333)).